We begin with the raw amino-acid sequence, 68 residues long: UPF0434 protein H16_A0605 (68 aa).

This sequence belongs to the UPF0434 family.

This Cupriavidus necator (strain ATCC 17699 / DSM 428 / KCTC 22496 / NCIMB 10442 / H16 / Stanier 337) (Ralstonia eutropha) protein is UPF0434 protein H16_A0605.